A 338-amino-acid polypeptide reads, in one-letter code: Mitoferrin-1 (338 aa).

The segment at 1-37 (MELRRGGVGNQAAGRRMDGDCRDGGCGSKDAGSEDYE) is disordered. 3 Solcar repeats span residues 43 to 131 (ASVS…MKRT), 141 to 225 (NSHL…LQEQ), and 232 to 326 (YNPQ…FKYI). A run of 6 helical transmembrane segments spans residues 45 to 64 (VSTH…SIMY), 106 to 125 (GLNV…FACY), 143 to 162 (HLAN…AVMN), 200 to 219 (SYTT…FITY), 234 to 253 (PQSH…AATT), and 301 to 320 (GIQA…WSVY).

It belongs to the mitochondrial carrier (TC 2.A.29) family. In terms of assembly, interacts with ACB10; this interaction stabilizes SLC25A37 and enhances the function of SLC25A37 to import mitochondrial iron during erythroid differentiation. Highly expressed in hematopoietic organs, fetal liver, bone marrow and spleen.

It is found in the mitochondrion inner membrane. It catalyses the reaction Fe(2+)(in) = Fe(2+)(out). Mitochondrial iron transporter that specifically mediates iron uptake in developing erythroid cells, thereby playing an essential role in heme biosynthesis. This Mus musculus (Mouse) protein is Mitoferrin-1 (Slc25a37).